We begin with the raw amino-acid sequence, 397 residues long: RNA binding protein fox-1 homolog 1 (397 aa).

Positions 1-121 are disordered; that stretch reads MNCEREQLRG…NKSQPKRLHV (121 aa). The span at 70–87 shows a compositional bias: polar residues; that stretch reads QTHSEQSPADTSAQTVSG. Residues 88–99 show a composition bias toward low complexity; it reads TATQTDDAAPTD. A compositionally biased stretch (polar residues) spans 100-113; sequence GQPQTQPSENTENK. Positions 117 to 193 constitute an RRM domain; that stretch reads KRLHVSNIPF…RKIEVNNATA (77 aa). Position 317 is an asymmetric dimethylarginine (arginine 317). Omega-N-methylarginine is present on arginine 388.

In terms of assembly, binds to the C-terminus of ATXN2. In terms of tissue distribution, predominantly expressed in muscle and brain.

Its subcellular location is the nucleus. It is found in the cytoplasm. Functionally, RNA-binding protein that regulates alternative splicing events by binding to 5'-UGCAUGU-3' elements. Regulates alternative splicing of tissue-specific exons and of differentially spliced exons during erythropoiesis. The protein is RNA binding protein fox-1 homolog 1 (RBFOX1) of Homo sapiens (Human).